A 552-amino-acid polypeptide reads, in one-letter code: Carboxypeptidase Y homolog A (552 aa).

Positions 1 to 17 (MRVLPATLLVGAATAAT) are cleaved as a signal peptide. The propeptide occupies 18-133 (PAQQVLGGLQ…KLEAYDLRIK (116 aa)). Cystine bridges form between Cys188–Cys428, Cys322–Cys336, Cys346–Cys369, Cys353–Cys362, and Cys391–Cys398. Asn219 is a glycosylation site (N-linked (GlcNAc...) asparagine). Ser275 is an active-site residue. Asp467 is a catalytic residue. Asn518 carries N-linked (GlcNAc...) asparagine glycosylation. Residue His529 is part of the active site.

The protein belongs to the peptidase S10 family.

The protein resides in the vacuole. The enzyme catalyses Release of a C-terminal amino acid with broad specificity.. Vacuolar carboxypeptidase involved in degradation of small peptides. Digests preferentially peptides containing an aliphatic or hydrophobic residue in P1' position, as well as methionine, leucine or phenylalanine in P1 position of ester substrate. The sequence is that of Carboxypeptidase Y homolog A (cpyA) from Emericella nidulans (strain FGSC A4 / ATCC 38163 / CBS 112.46 / NRRL 194 / M139) (Aspergillus nidulans).